Reading from the N-terminus, the 284-residue chain is 2-dehydro-3-deoxyphosphooctonate aldolase (284 aa).

This sequence belongs to the KdsA family.

It localises to the cytoplasm. It catalyses the reaction D-arabinose 5-phosphate + phosphoenolpyruvate + H2O = 3-deoxy-alpha-D-manno-2-octulosonate-8-phosphate + phosphate. It participates in carbohydrate biosynthesis; 3-deoxy-D-manno-octulosonate biosynthesis; 3-deoxy-D-manno-octulosonate from D-ribulose 5-phosphate: step 2/3. Its pathway is bacterial outer membrane biogenesis; lipopolysaccharide biosynthesis. In Burkholderia orbicola (strain MC0-3), this protein is 2-dehydro-3-deoxyphosphooctonate aldolase.